Reading from the N-terminus, the 125-residue chain is Holo-[acyl-carrier-protein] synthase (125 aa).

Residues D8 and E60 each coordinate Mg(2+).

It belongs to the P-Pant transferase superfamily. AcpS family. Requires Mg(2+) as cofactor.

The protein localises to the cytoplasm. It catalyses the reaction apo-[ACP] + CoA = holo-[ACP] + adenosine 3',5'-bisphosphate + H(+). Functionally, transfers the 4'-phosphopantetheine moiety from coenzyme A to a Ser of acyl-carrier-protein. This is Holo-[acyl-carrier-protein] synthase from Wolbachia sp. subsp. Brugia malayi (strain TRS).